Consider the following 457-residue polypeptide: F-box only protein 13 (457 aa).

Residues 64 to 110 (EFPMDDLNDDVLERVLSWLPTSCFFRMSSVCKRWKSSQTSKSFKLAC) form the F-box domain.

This chain is F-box only protein 13 (FBX13), found in Arabidopsis thaliana (Mouse-ear cress).